Here is a 547-residue protein sequence, read N- to C-terminus: Chaperonin GroEL (547 aa).

Residues 30–33 (TLGP), lysine 51, 87–91 (DGTTT), glycine 415, and aspartate 495 each bind ATP.

This sequence belongs to the chaperonin (HSP60) family. In terms of assembly, forms a cylinder of 14 subunits composed of two heptameric rings stacked back-to-back. Interacts with the co-chaperonin GroES.

Its subcellular location is the cytoplasm. It catalyses the reaction ATP + H2O + a folded polypeptide = ADP + phosphate + an unfolded polypeptide.. Its function is as follows. Together with its co-chaperonin GroES, plays an essential role in assisting protein folding. The GroEL-GroES system forms a nano-cage that allows encapsulation of the non-native substrate proteins and provides a physical environment optimized to promote and accelerate protein folding. The chain is Chaperonin GroEL from Shewanella pealeana (strain ATCC 700345 / ANG-SQ1).